The sequence spans 241 residues: Dolichol-phosphate mannosyltransferase subunit 1 (241 aa).

GDP-alpha-D-mannose contacts are provided by Pro-13, Tyr-15, Glu-17, Ile-44, Asp-46, Asp-99, Ala-100, Asp-101, Arg-128, Arg-215, and Lys-221. A Mg(2+)-binding site is contributed by Asp-101. Asp-101 is a Mn(2+) binding site.

It belongs to the glycosyltransferase 2 family. Mg(2+) is required as a cofactor. Mn(2+) serves as cofactor. Requires Ca(2+) as cofactor.

It localises to the endoplasmic reticulum. It catalyses the reaction a di-trans,poly-cis-dolichyl phosphate + GDP-alpha-D-mannose = a di-trans,poly-cis-dolichyl beta-D-mannosyl phosphate + GDP. Its pathway is protein modification; protein glycosylation. Its function is as follows. Transfers mannose from GDP-mannose to dolichol monophosphate to form dolichol phosphate mannose (Dol-P-Man) which is the mannosyl donor in pathways leading to N-glycosylation, glycosyl phosphatidylinositol membrane anchoring, and O-mannosylation of proteins. This chain is Dolichol-phosphate mannosyltransferase subunit 1, found in Drosophila melanogaster (Fruit fly).